Consider the following 443-residue polypeptide: Adenylyltransferase and sulfurtransferase UBA4 (443 aa).

ATP is bound by residues Gly-81, Asp-102, 109–113 (SNLHR), Lys-126, and 170–171 (DS). Zn(2+) is bound by residues Cys-212 and Cys-215. The active-site Glycyl thioester intermediate; for adenylyltransferase activity is Cys-229. Positions 290 and 293 each coordinate Zn(2+). A Rhodanese domain is found at 342–441 (KERGFVCLDV…YIDEINPSLP (100 aa)). Catalysis depends on Cys-400, which acts as the Cysteine persulfide intermediate; for sulfurtransferase activity.

It in the N-terminal section; belongs to the HesA/MoeB/ThiF family. UBA4 subfamily. Requires Zn(2+) as cofactor.

The protein resides in the cytoplasm. It localises to the cytosol. Its pathway is tRNA modification; 5-methoxycarbonylmethyl-2-thiouridine-tRNA biosynthesis. Its function is as follows. Plays a central role in 2-thiolation of mcm(5)S(2)U at tRNA wobble positions of cytosolic tRNA(Lys), tRNA(Glu) and tRNA(Gln). Acts by mediating the C-terminal thiocarboxylation of sulfur carrier URM1. Its N-terminus first activates URM1 as acyl-adenylate (-COAMP), then the persulfide sulfur on the catalytic cysteine is transferred to URM1 to form thiocarboxylation (-COSH) of its C-terminus. The reaction probably involves hydrogen sulfide that is generated from the persulfide intermediate and that acts as a nucleophile towards URM1. Subsequently, a transient disulfide bond is formed. Does not use thiosulfate as sulfur donor; NFS1 probably acting as a sulfur donor for thiocarboxylation reactions. Prior mcm(5) tRNA modification by the elongator complex is required for 2-thiolation. May also be involved in protein urmylation. The sequence is that of Adenylyltransferase and sulfurtransferase UBA4 from Eremothecium gossypii (strain ATCC 10895 / CBS 109.51 / FGSC 9923 / NRRL Y-1056) (Yeast).